Here is a 434-residue protein sequence, read N- to C-terminus: Glutamyl-tRNA reductase (434 aa).

Substrate is bound by residues 52-55 (TCNR), S115, 120-122 (ETQ), and Q126. The active-site Nucleophile is C53. 195 to 200 (GAGEMI) contacts NADP(+).

Belongs to the glutamyl-tRNA reductase family. As to quaternary structure, homodimer.

The catalysed reaction is (S)-4-amino-5-oxopentanoate + tRNA(Glu) + NADP(+) = L-glutamyl-tRNA(Glu) + NADPH + H(+). Its pathway is porphyrin-containing compound metabolism; protoporphyrin-IX biosynthesis; 5-aminolevulinate from L-glutamyl-tRNA(Glu): step 1/2. In terms of biological role, catalyzes the NADPH-dependent reduction of glutamyl-tRNA(Glu) to glutamate 1-semialdehyde (GSA). This Cupriavidus metallidurans (strain ATCC 43123 / DSM 2839 / NBRC 102507 / CH34) (Ralstonia metallidurans) protein is Glutamyl-tRNA reductase.